The following is a 201-amino-acid chain: Recombination protein RecR (201 aa).

The C4-type zinc finger occupies 57-72; it reads CKLCQIYTEQPLCNIC. The Toprim domain occupies 80-175; that stretch reads TLLCVVESPA…KCSRIAHGVP (96 aa).

It belongs to the RecR family.

May play a role in DNA repair. It seems to be involved in an RecBC-independent recombinational process of DNA repair. It may act with RecF and RecO. The sequence is that of Recombination protein RecR from Coxiella burnetii (strain RSA 493 / Nine Mile phase I).